Reading from the N-terminus, the 38-residue chain is Photosystem II reaction center protein M (38 aa).

Residues 7 to 27 traverse the membrane as a helical segment; it reads GFVASILFVLVPTVFLLILYI.

It belongs to the PsbM family. PSII is composed of 1 copy each of membrane proteins PsbA, PsbB, PsbC, PsbD, PsbE, PsbF, PsbH, PsbI, PsbJ, PsbK, PsbL, PsbM, PsbT, PsbX, PsbY, PsbZ, Psb30/Ycf12, peripheral proteins PsbO, CyanoQ (PsbQ), PsbU, PsbV and a large number of cofactors. It forms dimeric complexes.

The protein resides in the cellular thylakoid membrane. One of the components of the core complex of photosystem II (PSII). PSII is a light-driven water:plastoquinone oxidoreductase that uses light energy to abstract electrons from H(2)O, generating O(2) and a proton gradient subsequently used for ATP formation. It consists of a core antenna complex that captures photons, and an electron transfer chain that converts photonic excitation into a charge separation. This subunit is found at the monomer-monomer interface. The protein is Photosystem II reaction center protein M of Nostoc punctiforme (strain ATCC 29133 / PCC 73102).